Here is a 1048-residue protein sequence, read N- to C-terminus: Anguibactin system regulator (1048 aa).

The Carrier domain maps to 965–1039 (PIITASEDRV…AFAIIMDRCR (75 aa)).

This sequence belongs to the ATP-dependent AMP-binding enzyme family.

Its pathway is siderophore biosynthesis; anguibactin biosynthesis. In terms of biological role, bifunctional protein that plays an essential role in virulence. Plays a role in both production of the siderophore anguibactin and regulation of iron transport genes. This Vibrio anguillarum (strain ATCC 68554 / 775) (Listonella anguillarum) protein is Anguibactin system regulator (angR).